The primary structure comprises 449 residues: Exodeoxyribonuclease 7 large subunit (449 aa).

This sequence belongs to the XseA family. Heterooligomer composed of large and small subunits.

The protein resides in the cytoplasm. The catalysed reaction is Exonucleolytic cleavage in either 5'- to 3'- or 3'- to 5'-direction to yield nucleoside 5'-phosphates.. Its function is as follows. Bidirectionally degrades single-stranded DNA into large acid-insoluble oligonucleotides, which are then degraded further into small acid-soluble oligonucleotides. The polypeptide is Exodeoxyribonuclease 7 large subunit (Salmonella paratyphi B (strain ATCC BAA-1250 / SPB7)).